A 472-amino-acid chain; its full sequence is MTTCSRQFTSSSSMKGSCGIGGGIGGGSSRISSVLAGGSCRAPSTYGGGLSVSSSRFSSGGACGLGGGYGGGFSSSSSSFGSGFGGGYGGGLGAGLGGGFGGGFAGGDGLLVGSEKVTMQNLNDRLASYLDKVRALEEANADLEVKIRDWYQRQRPAEIKDYSPYFKTIEDLRNKILTATVDNANVLLQIDNARLAADDFRTKYETELNLRMSVEADINGLRRVLDELTLARADLEMQIESLKEELAYLKKNHEEEMNALRGQVGGDVNVEMDAAPGVDLSRILNEMRDQYEKMAEKNRKDAEEWFFTKTEELNREVATNSELVQSGKSEISELRRTMQNLEIELQSQLSMKASLENSLEETKGRYCMQLAQIQEMIGSVEEQLAQLRCEMEQQNQEYKILLDVKTRLEQEIATYRRLLEGEDAHLSSSQFSSGSQSSRDVTSSSRQIRTKVMDVHDGKVVSTHEQVLRTKN.

Positions 1 to 114 are head; that stretch reads MTTCSRQFTS…AGGDGLLVGS (114 aa). A coil 1A region spans residues 115 to 150; the sequence is EKVTMQNLNDRLASYLDKVRALEEANADLEVKIRDW. The IF rod domain occupies 115-426; the sequence is EKVTMQNLND…RLLEGEDAHL (312 aa). The linker 1 stretch occupies residues 151-168; the sequence is YQRQRPAEIKDYSPYFKT. Positions 169–260 are coil 1B; the sequence is IEDLRNKILT…KNHEEEMNAL (92 aa). Residues 261–283 are linker 12; the sequence is RGQVGGDVNVEMDAAPGVDLSRI. A coil 2 region spans residues 284 to 422; the sequence is LNEMRDQYEK…ATYRRLLEGE (139 aa). The tail stretch occupies residues 423 to 472; sequence DAHLSSSQFSSGSQSSRDVTSSSRQIRTKVMDVHDGKVVSTHEQVLRTKN. The interval 425-472 is interaction with Type I keratins and keratin filaments; the sequence is HLSSSQFSSGSQSSRDVTSSSRQIRTKVMDVHDGKVVSTHEQVLRTKN. The interval 426 to 472 is disordered; sequence LSSSQFSSGSQSSRDVTSSSRQIRTKVMDVHDGKVVSTHEQVLRTKN. Low complexity predominate over residues 427–445; the sequence is SSSQFSSGSQSSRDVTSSS. At Ser-435 the chain carries Phosphoserine.

Belongs to the intermediate filament family. Heterotetramer of two type I and two type II keratins. Forms a disulfide-linked heterodimer (via 2B domains) with KRT5 (via 2B domains). Forms a heterodimer with KRT1; the interaction is more abundant in the absence of KRT5. Interacts with PLEC isoform 1C, when in a heterodimer with KRT5. Interacts with TRADD and with keratin filaments. Associates with other type I keratins. Interacts with EPPK1. Interacts with KLHL24. Interacts with PKP1 (via N-terminus) and PKP2. A disulfide bond is formed between rather than within filaments and promotes the formation of a keratin filament cage around the nucleus. In terms of processing, ubiquitinated by the BCR(KLHL24) E3 ubiquitin ligase complex. In terms of tissue distribution, expressed in the corneal epithelium (at protein level). Detected in the basal layer, lowered within the more apically located layers specifically in the stratum spinosum, stratum granulosum but is not detected in stratum corneum. Strongly expressed in the outer root sheath of anagen follicles but not in the germinative matrix, inner root sheath or hair. Found in keratinocytes surrounding the club hair during telogen.

It is found in the cytoplasm. The protein localises to the nucleus. In terms of biological role, the nonhelical tail domain is involved in promoting KRT5-KRT14 filaments to self-organize into large bundles and enhances the mechanical properties involved in resilience of keratin intermediate filaments in vitro. In Homo sapiens (Human), this protein is Keratin, type I cytoskeletal 14 (KRT14).